The sequence spans 401 residues: Type 3 secretion system translocon protein SctE (401 aa).

Residues 129-160 adopt a coiled-coil conformation; the sequence is IQRLHEQNMKKIEENQEKIKETEENAKQVKKS. Helical transmembrane passes span 166-186 and 225-245; these read IFGW…VASG and LGPI…VMTF. Residues 345 to 379 are a coiled coil; that stretch reads LALNKADMAALQSIIDRLKEELSHLSESHRQVMEL.

This sequence belongs to the SctE/SipB/YopB family. As to quaternary structure, the core secretion machinery of the T3SS is composed of approximately 20 different proteins, including cytoplasmic components, a base, an export apparatus and a needle. This subunit is involved in the formation of a pore, called the translocon, in host membrane. Interacts with YopD/SctB. Together with YopD/SctB, forms a multimeric integral membrane complex with a mass of between 500 and 700 kDa.

Its subcellular location is the secreted. It is found in the host membrane. Functionally, component of the type III secretion system (T3SS), also called injectisome, which is used to inject bacterial effector proteins into eukaryotic host cells. YopB/SctE and YopD/SctB are inserted into the host membrane where they form a pore and allow the translocation of effector proteins into the cytosol of target cells. Is an essential virulence determinant. Required for YopE translocation. In terms of biological role, essential for the establishment of Yersinia infections in a mouse model system, but not for the targeting of effector Yops. May modulate the host's immune response at a distance from the site of infection. This chain is Type 3 secretion system translocon protein SctE, found in Yersinia enterocolitica.